A 214-amino-acid chain; its full sequence is Transcriptional regulatory protein ComA (214 aa).

Residues 3–121 (KILVIDDHPA…KITQYIYHVL (119 aa)) enclose the Response regulatory domain. Aspartate 55 carries the 4-aspartylphosphate modification. Positions 147–212 (SQKEQDVLTP…EAVLIAKSDG (66 aa)) constitute an HTH luxR-type domain. The H-T-H motif DNA-binding region spans 171–190 (NQEIADALHLSKRSIEYSLT).

Phosphorylated by ComP.

It localises to the cytoplasm. Response regulator in the two-component regulatory system ComP/ComA involved in a major quorum response pathway that regulates the development of genetic competence. Regulates directly the expression of over 20 genes, including genes of the srfA operon, degQ, rapA, rapC, rapE, rapF, etc. Regulates indirectly, through the regulation of comK transcription, the expression of late competence genes. In Bacillus subtilis (strain 168), this protein is Transcriptional regulatory protein ComA (comA).